Here is an 860-residue protein sequence, read N- to C-terminus: MMNIKAFTLVSAVERELLMGDRDHISIECVECCGRNLYVGTNDCFIYHFLLEEKAMPTGTATFVATKQLHRHLGFKKPVNELCAASALNRLLVLCDNSITLVNMLNLEPVPSGARIKGATTFAVNESPVNGDPFCVEVCIISVKRRTVQMFLVYEDRVQIVKEVSTPEQPLAVAVDGYFLCLALTTQYIILNYSTGLSQDLFPYCSEEKPPIVKRIGRQEFLLAGPGGLGMFATVAGISQRAPVHWSENVIGAAVCFPYVIALDDEFITVHSMLDQQQKQTLPFKEGHILQDFEGRVIVATSKGVYILVPLPLEKQIQDLLANRRVEEALVLAKGARRNIPKEKFQVMYRRILQQAGFIQFAQLQFLEAKELFRSSQLDVRELISLYPFLLPTSSSFTRSHPPLHEYADLNQLTQGDQEKMAKCKRFLMSYLNEIRSTEVANGYKEDIDTALLKLYAEADHDSLLDLLVTENFCLLTDSAAWLEKHKKYFALGLLYHYNKQDASAVQLWVNIVNGDIQDSTRSDLYEYIVDFLTYCLDQELVWTHADWLLQKSEEIGVQIFTKRPLDEQQQTSFNPDNIISSLKKYPKALVKYLEHLVIDRRLQKEEYHTHLAILYLEEVLRQRVSTGGKDVEATETQAKLRRLLQKSDLYRVHLLKEKVQGAGLPMESAILHGKLGEHEKALHILVHEMGDFSAAEDYCLWSSEGQGAACRQRLFHTLLAMYLRAGPSAQDLTVAAVDLLNHHAREFDVTQVLQLLPDTWSVQLLCPFLMGAMRDSIHARRTTQVALGLAKSENLIYMYDKMKLKGNAVRLSERELCQLCQNPFGEPVFVRYPNGGLVHTHCAASRHTAPSSPSPGTRT.

Residues 24 to 297 form the CNH domain; the sequence is HISIECVECC…HILQDFEGRV (274 aa). The stretch at 564 to 732 is one CHCR repeat; sequence RPLDEQQQTS…YLRAGPSAQD (169 aa).

It belongs to the TRAP1 family. As to quaternary structure, interacts with TGFBR2 and ACVR2B; in the absence of ligand stimulation. Interacts with TGFBR1, ACVRL1, BMPR1A and ACVR1B; in the absence of ligand stimulation and to a less extent. Interacts with SMAD4; the interaction seems to be mutually exclusive with the interaction of SMAD4 and phosphorylated SMAD2. May interact with ALOX5. Interacts with RAB5C. Interacts with VPS8, VPS11 and VPS16. Component of the putative class C core vacuole/endosome tethering (CORVET) complex; the core of which composed of the class C Vps proteins VPS11, VPS16, VPS18 and VPS33A, is associated with VPS8 and TGFBRAP1.

The protein localises to the cytoplasm. It is found in the early endosome. Functionally, plays a role in the TGF-beta/activin signaling pathway. It associates with inactive heteromeric TGF-beta and activin receptor complexes, mainly through the type II receptor, and is released upon activation of signaling. May recruit SMAD4 to the vicinity of the receptor complex and facilitate its interaction with receptor-regulated Smads, such as SMAD2. In terms of biological role, plays a role in vesicle-mediated protein trafficking of the endocytic membrane transport pathway. Believed to act as a component of the putative CORVET endosomal tethering complexes which is proposed to be involved in the Rab5-to-Rab7 endosome conversion probably implicating MON1A/B, and via binding SNAREs and SNARE complexes to mediate tethering and docking events during SNARE-mediated membrane fusion. The CORVET complex is proposed to function as a Rab5 effector to mediate early endosome fusion probably in specific endosome subpopulations. Functions predominantly in APPL1-containing endosomes and in degradative but not recycling trafficking of endocytosed cargo. In Mus musculus (Mouse), this protein is Transforming growth factor-beta receptor-associated protein 1 (Tgfbrap1).